The sequence spans 156 residues: ATP synthase subunit b (156 aa).

Residues 3 to 23 (ITFTIFAQSIAFAALIWIVAT) form a helical membrane-spanning segment.

It belongs to the ATPase B chain family. As to quaternary structure, F-type ATPases have 2 components, F(1) - the catalytic core - and F(0) - the membrane proton channel. F(1) has five subunits: alpha(3), beta(3), gamma(1), delta(1), epsilon(1). F(0) has three main subunits: a(1), b(2) and c(10-14). The alpha and beta chains form an alternating ring which encloses part of the gamma chain. F(1) is attached to F(0) by a central stalk formed by the gamma and epsilon chains, while a peripheral stalk is formed by the delta and b chains.

The protein localises to the cell inner membrane. In terms of biological role, f(1)F(0) ATP synthase produces ATP from ADP in the presence of a proton or sodium gradient. F-type ATPases consist of two structural domains, F(1) containing the extramembraneous catalytic core and F(0) containing the membrane proton channel, linked together by a central stalk and a peripheral stalk. During catalysis, ATP synthesis in the catalytic domain of F(1) is coupled via a rotary mechanism of the central stalk subunits to proton translocation. Component of the F(0) channel, it forms part of the peripheral stalk, linking F(1) to F(0). The chain is ATP synthase subunit b from Xylella fastidiosa (strain M12).